The sequence spans 537 residues: 2-succinyl-5-enolpyruvyl-6-hydroxy-3-cyclohexene-1-carboxylate synthase (537 aa).

This sequence belongs to the TPP enzyme family. MenD subfamily. As to quaternary structure, homodimer. It depends on Mg(2+) as a cofactor. Mn(2+) serves as cofactor. The cofactor is thiamine diphosphate.

The enzyme catalyses isochorismate + 2-oxoglutarate + H(+) = 5-enolpyruvoyl-6-hydroxy-2-succinyl-cyclohex-3-ene-1-carboxylate + CO2. It participates in quinol/quinone metabolism; 1,4-dihydroxy-2-naphthoate biosynthesis; 1,4-dihydroxy-2-naphthoate from chorismate: step 2/7. The protein operates within quinol/quinone metabolism; menaquinone biosynthesis. Functionally, catalyzes the thiamine diphosphate-dependent decarboxylation of 2-oxoglutarate and the subsequent addition of the resulting succinic semialdehyde-thiamine pyrophosphate anion to isochorismate to yield 2-succinyl-5-enolpyruvyl-6-hydroxy-3-cyclohexene-1-carboxylate (SEPHCHC). This Nocardioides sp. (strain ATCC BAA-499 / JS614) protein is 2-succinyl-5-enolpyruvyl-6-hydroxy-3-cyclohexene-1-carboxylate synthase.